The sequence spans 671 residues: Acetyl-coenzyme A synthetase 1 (671 aa).

Residues 210–213 (RGGK) and Thr-329 each bind CoA. ATP is bound by residues 405-407 (GEP), 429-434 (DTYWQT), Asp-520, and Arg-535. Ser-543 is a CoA binding site. Arg-546 contacts ATP. Arg-605 contributes to the CoA binding site.

The protein belongs to the ATP-dependent AMP-binding enzyme family.

The catalysed reaction is acetate + ATP + CoA = acetyl-CoA + AMP + diphosphate. In Debaryomyces hansenii (strain ATCC 36239 / CBS 767 / BCRC 21394 / JCM 1990 / NBRC 0083 / IGC 2968) (Yeast), this protein is Acetyl-coenzyme A synthetase 1 (ACS1).